A 1127-amino-acid polypeptide reads, in one-letter code: uncharacterized protein (1127 aa).

An N-terminal signal peptide occupies residues 1–26 (MRIHQRSAPCVPVLLFLFLPSAPLCA). Residues 533–600 (ETESLSPPAD…ASSSPSEMAV (68 aa)) form a disordered region. Low complexity-rich tracts occupy residues 536–549 (SLSP…TPSP) and 583–599 (AGAS…SEMA). A coiled-coil region spans residues 1076 to 1126 (SEDEKEYQRALQELQKGNKLVASAVVEQLLQKDRNKKSAKIQQLKKRIDAQ).

This is an uncharacterized protein from Treponema pallidum (strain Nichols).